We begin with the raw amino-acid sequence, 689 residues long: Methionine--tRNA ligase (689 aa).

The 'HIGH' region motif lies at 16 to 26 (PYANAGLHLGH). Zn(2+) contacts are provided by Cys147, Cys150, Cys160, and Cys163. The 'KMSKS' region signature appears at 342-346 (KMSKS). ATP is bound at residue Lys345. Positions 585 to 689 (DFAKVDLRVG…AGVKPGMRVG (105 aa)) constitute a tRNA-binding domain.

The protein belongs to the class-I aminoacyl-tRNA synthetase family. MetG type 1 subfamily. In terms of assembly, homodimer. Requires Zn(2+) as cofactor.

Its subcellular location is the cytoplasm. It carries out the reaction tRNA(Met) + L-methionine + ATP = L-methionyl-tRNA(Met) + AMP + diphosphate. Functionally, is required not only for elongation of protein synthesis but also for the initiation of all mRNA translation through initiator tRNA(fMet) aminoacylation. The sequence is that of Methionine--tRNA ligase from Chromobacterium violaceum (strain ATCC 12472 / DSM 30191 / JCM 1249 / CCUG 213 / NBRC 12614 / NCIMB 9131 / NCTC 9757 / MK).